The chain runs to 1143 residues: AP-3 complex subunit delta (1143 aa).

8 HEAT repeats span residues 129 to 166, 167 to 203, 205 to 242, 245 to 279, 280 to 317, 318 to 354, 356 to 389, and 416 to 455; these read DLARELANDILTLLSTQKTHILKRAITVLYKIFLRYPE, SLRPAFPKLREKLDDPEPSVVSCSVNVICELARRNPK, YLPLAPVLFRILTNTTNNYWMLIKIVKLFAALTPHEPR, KKLIDPLTNIINSSPSVSLLYECIQTCITGMSDHI, PLMKLCISKLRTLIEHNDQNLKYLGLLALNNIMKIHPK, AVSEHRDLVLNCLEDDDISIRLRALDLLPGMTSKKNI, DIVFKLLDHLDNAEGQYKEQIIEKIIELCSMGTY, and LIASQLLDVVIRVKIVRAYSTRQMIELLKNPKLMSNPTEG. 5 disordered regions span residues 520–541, 634–692, 704–728, 741–792, and 829–899; these read KIPSLDDDDEEEEAQEEEDQNE, QEPI…RHPI, KQANNPYMLGGKVSKKLSTNDPENI, HVGA…NDAL, and KKNA…QAAA. Residues 524 to 540 show a composition bias toward acidic residues; sequence LDDDDEEEEAQEEEDQN. Residues 526 to 550 adopt a coiled-coil conformation; that stretch reads DDDEEEEAQEEEDQNEITHEIVQEC. The span at 653–662 shows a compositional bias: basic residues; sequence HQKKHHKHHR. Residues 666–675 show a composition bias toward acidic residues; the sequence is DGDDDEDDET. Positions 814 to 835 form a coiled coil; sequence TDIIKEKEREMAMLAKKNAKLS. Polar residues predominate over residues 840–849; it reads PSTANYSEVT. Composition is skewed to low complexity over residues 854–867 and 881–899; these read APAKKATKKAAAGS and KPAATSSTTTTTKSTQAAA. The GAE domain maps to 914-1016; that stretch reads KTILDDDNFK…FTLLASPSSS (103 aa).

Belongs to the adaptor complexes large subunit family. As to quaternary structure, adaptor protein complex 3 (AP-3) is a heterotetramer composed of two large adaptins (delta-type subunit and beta-type subunit), a medium adaptin (mu-type subunit) and a small adaptin (sigma-type subunit).

The protein resides in the endosome membrane. Functionally, part of the AP-3 complex, an adaptor-related complex which is essential for the compartmentalization of the endocytic pathway. The chain is AP-3 complex subunit delta (ap3d1) from Dictyostelium discoideum (Social amoeba).